The following is a 452-amino-acid chain: Trigger factor (452 aa).

In terms of domain architecture, PPIase FKBP-type spans 171-256 (GDRVTVSFKG…ATKLEAPQET (86 aa)).

It belongs to the FKBP-type PPIase family. Tig subfamily.

The protein resides in the cytoplasm. It catalyses the reaction [protein]-peptidylproline (omega=180) = [protein]-peptidylproline (omega=0). Functionally, involved in protein export. Acts as a chaperone by maintaining the newly synthesized protein in an open conformation. Functions as a peptidyl-prolyl cis-trans isomerase. The protein is Trigger factor of Rhodopseudomonas palustris (strain ATCC BAA-98 / CGA009).